The chain runs to 297 residues: Inosose dehydratase (297 aa).

It belongs to the IolE/MocC family. Glutathione is required as a cofactor. It depends on Co(2+) as a cofactor. Requires Mn(2+) as cofactor.

It catalyses the reaction scyllo-inosose = 3D-3,5/4-trihydroxycyclohexane-1,2-dione + H2O. It functions in the pathway polyol metabolism; myo-inositol degradation into acetyl-CoA; acetyl-CoA from myo-inositol: step 2/7. In terms of biological role, catalyzes the dehydration of inosose (2-keto-myo-inositol, 2KMI or 2,4,6/3,5-pentahydroxycyclohexanone) to 3D-(3,5/4)-trihydroxycyclohexane-1,2-dione (D-2,3-diketo-4-deoxy-epi-inositol). The chain is Inosose dehydratase from Clostridium perfringens (strain ATCC 13124 / DSM 756 / JCM 1290 / NCIMB 6125 / NCTC 8237 / Type A).